Consider the following 608-residue polypeptide: Protein UL27 (608 aa).

Residues 1–13 (MNPVDQPPPPPLT) are compositionally biased toward pro residues. The interval 1 to 33 (MNPVDQPPPPPLTQQPEEQAKEDHDDGDERLFR) is disordered. Residues 18 to 33 (EQAKEDHDDGDERLFR) are compositionally biased toward basic and acidic residues.

The protein belongs to the herpesviridae U4 family. As to quaternary structure, interacts with host KAT5, PSME3 and EP400.

It localises to the host nucleus. Its subcellular location is the host nucleolus. In terms of biological role, promotes a cell cycle arrest in G0/G1 by inducing the proteasomal degradation of host histone acetyltransferase KAT5/Tip60. This Homo sapiens (Human) protein is Protein UL27 (UL27).